The chain runs to 328 residues: Flotillin-like protein FloA (328 aa).

2 helical membrane-spanning segments follow: residues 1–21 (MFGL…LVLF) and 26–46 (VGLW…TLVG).

It belongs to the flotillin-like FloA family. As to quaternary structure, homooligomerizes.

The protein localises to the cell membrane. It is found in the membrane raft. In terms of biological role, found in functional membrane microdomains (FMM) that may be equivalent to eukaryotic membrane rafts. FMMs are highly dynamic and increase in number as cells age. Flotillins are thought to be important factors in membrane fluidity. The chain is Flotillin-like protein FloA from Staphylococcus haemolyticus (strain JCSC1435).